An 893-amino-acid chain; its full sequence is DNA mismatch repair protein MutS (893 aa).

A compositionally biased stretch (low complexity) spans 1-17; sequence MESTMSSASTNASPPSA. Positions 1-22 are disordered; sequence MESTMSSASTNASPPSASEKHT. 641 to 648 lines the ATP pocket; sequence GPNMGGKS.

It belongs to the DNA mismatch repair MutS family.

This protein is involved in the repair of mismatches in DNA. It is possible that it carries out the mismatch recognition step. This protein has a weak ATPase activity. This Herminiimonas arsenicoxydans protein is DNA mismatch repair protein MutS.